Reading from the N-terminus, the 238-residue chain is Ribonuclease PH (238 aa).

Residues Arg-86 and 124–126 (GTR) contribute to the phosphate site.

Belongs to the RNase PH family. In terms of assembly, homohexameric ring arranged as a trimer of dimers.

It catalyses the reaction tRNA(n+1) + phosphate = tRNA(n) + a ribonucleoside 5'-diphosphate. In terms of biological role, phosphorolytic 3'-5' exoribonuclease that plays an important role in tRNA 3'-end maturation. Removes nucleotide residues following the 3'-CCA terminus of tRNAs; can also add nucleotides to the ends of RNA molecules by using nucleoside diphosphates as substrates, but this may not be physiologically important. Probably plays a role in initiation of 16S rRNA degradation (leading to ribosome degradation) during starvation. The protein is Ribonuclease PH of Psychrobacter cryohalolentis (strain ATCC BAA-1226 / DSM 17306 / VKM B-2378 / K5).